Consider the following 358-residue polypeptide: Trace amine-associated receptor 7a (358 aa).

Residues 1–47 lie on the Extracellular side of the membrane; sequence MDKLVDNFLSGQSRTMSEDLLSASSPQLCYENLNGSCIRSPYSPGPR. The N-linked (GlcNAc...) asparagine glycan is linked to asparagine 34. 2 cysteine pairs are disulfide-bonded: cysteine 37-cysteine 201 and cysteine 120-cysteine 205. The chain crosses the membrane as a helical span at residues 48–68; the sequence is LILYAVFGFGAVLAVCGNLLV. Topologically, residues 69-83 are cytoplasmic; that stretch reads MTSILHFRQLHSPAN. The helical transmembrane segment at 84-104 threads the bilayer; that stretch reads FLVASLACADFLVGLTVMPFS. Topologically, residues 105-121 are extracellular; sequence TVRSVEGCWYFGDTYCK. Residues 122-143 form a helical membrane-spanning segment; it reads FHSCFEGSFCYSSIFHLCFISV. The Cytoplasmic segment spans residues 144–166; the sequence is DRYIAVSDPLIYPTRFTASVSGK. A helical membrane pass occupies residues 167-187; it reads CITFSWLLSIIYSFSLLYTGA. At 188–212 the chain is on the extracellular side; the sequence is NEAGLEDLVSALTCVGGCQIAVNQS. N-linked (GlcNAc...) asparagine glycosylation occurs at asparagine 210. A helical membrane pass occupies residues 213 to 233; it reads WVFINFLLFLVPTLVMMTVYS. Over 234 to 274 the chain is Cytoplasmic; it reads KIFLIAKQQAQNIEKMSKQTTRASESYKDRVAKRERKAAKT. A helical membrane pass occupies residues 275-295; the sequence is LGIAVAAFLLSWLPYFIDSII. The Extracellular segment spans residues 296-309; that stretch reads DAFLGFITPTYVYE. A helical transmembrane segment spans residues 310–333; the sequence is ILVWIAYYNSAMNPLIYAFFYPWF. At 334 to 358 the chain is on the cytoplasmic side; that stretch reads RKAIKLIVTGKILRQNSSVTNLFPE.

Belongs to the G-protein coupled receptor 1 family.

It localises to the cell membrane. Olfactory receptor specific for N,N-dimethylalkylamines trace amines. Trace amine compounds are enriched in animal body fluids and act on trace amine-associated receptors (TAARs) to elicit both intraspecific and interspecific innate behaviors. Ligand-binding causes a conformation change that triggers signaling via G(s)-class of G alpha proteins (GNAL or GNAS). This chain is Trace amine-associated receptor 7a, found in Rattus norvegicus (Rat).